The following is a 314-amino-acid chain: Small ribosomal subunit biogenesis GTPase RsgA (314 aa).

The interval Met1–Gln21 is disordered. One can recognise a CP-type G domain in the interval Ser85–Phe246. GTP is bound by residues Asn134 to Asp137 and Gly188 to Thr196. Zn(2+) contacts are provided by Cys270, Cys275, His277, and Cys283.

It belongs to the TRAFAC class YlqF/YawG GTPase family. RsgA subfamily. In terms of assembly, monomer. Associates with 30S ribosomal subunit, binds 16S rRNA. The cofactor is Zn(2+).

It is found in the cytoplasm. In terms of biological role, one of several proteins that assist in the late maturation steps of the functional core of the 30S ribosomal subunit. Helps release RbfA from mature subunits. May play a role in the assembly of ribosomal proteins into the subunit. Circularly permuted GTPase that catalyzes slow GTP hydrolysis, GTPase activity is stimulated by the 30S ribosomal subunit. The sequence is that of Small ribosomal subunit biogenesis GTPase RsgA from Burkholderia pseudomallei (strain 1710b).